The sequence spans 142 residues: Large ribosomal subunit protein uL11 (142 aa).

This sequence belongs to the universal ribosomal protein uL11 family. As to quaternary structure, part of the ribosomal stalk of the 50S ribosomal subunit. Interacts with L10 and the large rRNA to form the base of the stalk. L10 forms an elongated spine to which L12 dimers bind in a sequential fashion forming a multimeric L10(L12)X complex. One or more lysine residues are methylated.

Its function is as follows. Forms part of the ribosomal stalk which helps the ribosome interact with GTP-bound translation factors. The chain is Large ribosomal subunit protein uL11 from Photobacterium profundum (strain SS9).